The primary structure comprises 444 residues: Alpha-1,3-mannosyl-glycoprotein 2-beta-N-acetylglucosaminyltransferase (444 aa).

Topologically, residues 1-6 are cytoplasmic; the sequence is MARISC. The chain crosses the membrane as a helical; Signal-anchor for type II membrane protein span at residues 7–24; sequence DLRFLLIPAAFMFIYIQM. Over 25-444 the chain is Lumenal; the sequence is RLFQTQSQYA…SVMQLGIRNS (420 aa). A coiled-coil region spans residues 61–92; the sequence is KQSRIVALEDMKNRQDEELVQLKDLIQTFEKK. Residues Arg-115, Asp-144, His-188, and Asp-210 each contribute to the substrate site. Asp-211 serves as a coordination point for Mn(2+). Catalysis depends on Asp-287, which acts as the Proton acceptor. Ser-318 lines the substrate pocket. A glycan (N-linked (GlcNAc...) asparagine) is linked at Asn-351.

Belongs to the glycosyltransferase 13 family. The cofactor is Mn(2+). Glycosylated. Expressed in roots, stems, leaves and flowers.

Its subcellular location is the golgi apparatus membrane. The catalysed reaction is N(4)-(alpha-D-Man-(1-&gt;3)-[alpha-D-Man-(1-&gt;3)-[alpha-D-Man-(1-&gt;6)]-alpha-D-Man-(1-&gt;6)]-beta-D-Man-(1-&gt;4)-beta-D-GlcNAc-(1-&gt;4)-beta-D-GlcNAc)-L-asparaginyl-[protein] (N-glucan mannose isomer 5A1,2) + UDP-N-acetyl-alpha-D-glucosamine = N(4)-{beta-D-GlcNAc-(1-&gt;2)-alpha-D-Man-(1-&gt;3)-[alpha-D-Man-(1-&gt;3)-[alpha-D-Man-(1-&gt;6)]-alpha-D-Man-(1-&gt;6)]-beta-D-Man-(1-&gt;4)-beta-D-GlcNAc-(1-&gt;4)-beta-D-GlcNAc}-L-asparaginyl-[protein] + UDP + H(+). The protein operates within protein modification; protein glycosylation. Initiates complex N-linked carbohydrate formation. Essential for the conversion of high-mannose to hybrid and complex N-glycans. Required for normal root growth and morphology. The polypeptide is Alpha-1,3-mannosyl-glycoprotein 2-beta-N-acetylglucosaminyltransferase (Arabidopsis thaliana (Mouse-ear cress)).